The sequence spans 420 residues: MNYQNEQNAYQMQNQENVPPMSYGYPMPTPEQFQKMSYGQNFQAPWDMQQQIQMFQQYHQNFQGGYSDPFTYQNQYAHQPKIVTVTLQDPQDLWKELHYLSNEQNVLNNGRKIFPALNYKVEHLNPESNYKVEILLRRMVPYQIQYSNGSWSRKNVQSKKTIAMKTEKVFVGEFTGQDIMRTGLDLSDVKVFNIGSDNKKKVTPYEEMSDAEKREYDTQYSKKKTSMLEVSNECKYIPVLIINEILPNQELRLVGEFENEITQFATVSSYKNHIVKALRTAANPTSRGDAKQEAVQVGKQWRSSNKSLLESLRPSMICTSVSTTAPSTNFHAPLQYPGTSSPSSNFAPMTPSTSFDSAYSSFNVTSSTPEQMCYNPIPSMSTDYSFCSFDSATSSPPLQPTATSPEASQNQIKLEMNQYM.

Positions 93-291 (LWKELHYLSN…ANPTSRGDAK (199 aa)) form a DNA-binding region, T-box. Positions 395–412 (SPPLQPTATSPEASQNQI) are enriched in polar residues. The tract at residues 395-420 (SPPLQPTATSPEASQNQIKLEMNQYM) is disordered.

The protein localises to the nucleus. The protein is Putative T-box protein 33 (tbx-33) of Caenorhabditis elegans.